Here is a 693-residue protein sequence, read N- to C-terminus: DNA ligase (693 aa).

NAD(+) contacts are provided by residues 35–39 (DAEYD), 84–85 (SI), and glutamate 121. The N6-AMP-lysine intermediate role is filled by lysine 123. Residues arginine 144, glutamate 180, lysine 297, and lysine 321 each contribute to the NAD(+) site. Residues cysteine 418, cysteine 421, cysteine 436, and cysteine 442 each coordinate Zn(2+). The BRCT domain occupies 601-690 (PASGSVAGLT…EQSPINNKDG (90 aa)).

This sequence belongs to the NAD-dependent DNA ligase family. LigA subfamily. Requires Mg(2+) as cofactor. Mn(2+) is required as a cofactor.

The enzyme catalyses NAD(+) + (deoxyribonucleotide)n-3'-hydroxyl + 5'-phospho-(deoxyribonucleotide)m = (deoxyribonucleotide)n+m + AMP + beta-nicotinamide D-nucleotide.. Its function is as follows. DNA ligase that catalyzes the formation of phosphodiester linkages between 5'-phosphoryl and 3'-hydroxyl groups in double-stranded DNA using NAD as a coenzyme and as the energy source for the reaction. It is essential for DNA replication and repair of damaged DNA. This is DNA ligase from Azoarcus sp. (strain BH72).